The primary structure comprises 238 residues: MTDTAENQTQNNWQAGHPRSIRSFVLRQSHMTAAQQRAIDTLWDSFGIDYQATPADLDARFGSSRPKILEIGFGMGTATAEIARRLPETDFLAIDVHGPGVGNLLKLIDENHLENIRVMRHDAVEVVENMLQDGSLDGIHIFFPDPWHKKRHHKRRLIQAPFIAKLLPKLKTGGYIHLATDWEEYAQQMLEVLSSFDSLQNTAADYAPTPDYRPETKFEARGKRLGHGVWDLVFKRIG.

Residues Glu-70, Asp-95, Asp-122, and Asp-145 each contribute to the S-adenosyl-L-methionine site. Asp-145 is an active-site residue. Substrate is bound by residues Lys-149, Asp-181, and 216-219 (TKFE).

It belongs to the class I-like SAM-binding methyltransferase superfamily. TrmB family.

The enzyme catalyses guanosine(46) in tRNA + S-adenosyl-L-methionine = N(7)-methylguanosine(46) in tRNA + S-adenosyl-L-homocysteine. The protein operates within tRNA modification; N(7)-methylguanine-tRNA biosynthesis. Functionally, catalyzes the formation of N(7)-methylguanine at position 46 (m7G46) in tRNA. The sequence is that of tRNA (guanine-N(7)-)-methyltransferase from Neisseria meningitidis serogroup B (strain ATCC BAA-335 / MC58).